A 77-amino-acid polypeptide reads, in one-letter code: VpAmp2.0 (77 aa).

Residues 1–23 form the signal peptide; the sequence is MQLRKALLVIFVAYLLVTDEAEA. A propeptide spanning residues 49–77 is cleaved from the precursor; it reads RKREIEDLFDPYQKDLDLQRLDRFFSQFQ.

The protein belongs to the non-disulfide-bridged peptide (NDBP) superfamily. Medium-length antimicrobial peptide (group 3) family. As to expression, expressed by the venom gland.

It is found in the secreted. Its subcellular location is the target cell membrane. Functionally, antimicrobial peptide with potent activity against Gram-positive bacteria S.aureus (MIC=10 uM) and S.agalactiaea (MIC=15 uM), and Gram-negative bacteria E.coli (MIC=24 uM) and P.aeruginosa (MIC=15 uM), as well as against yeasts Candida albicans (MIC=3.1 uM) and C.glabrata (MIC=25 uM). Also elicits low hemolysis on human erythrocytes (HC(50)=167 uM). This chain is VpAmp2.0, found in Mesomexovis punctatus (Scorpion).